Here is a 57-residue protein sequence, read N- to C-terminus: Lantibiotic nisin-Z (57 aa).

A propeptide spanning residues 1–23 (MSTKDFNLDLVSVSKKDSGASPR) is cleaved from the precursor. Thr-25 is subject to 2,3-didehydrobutyrine. The segment at residues 26-30 (SISLC) is a cross-link (lanthionine (Ser-Cys)). Ser-28 carries the post-translational modification 2,3-didehydroalanine (Ser). 4 cross-links (beta-methyllanthionine (Thr-Cys)) span residues 31–34 (TPGC), 36–42 (TGALMGC), 46–49 (TATC), and 48–51 (TCNC). Ser-56 bears the 2,3-didehydroalanine (Ser) mark.

The protein belongs to the type A lantibiotic family. In terms of processing, maturation of lantibiotics involves the enzymatic conversion of Thr, and Ser into dehydrated AA and the formation of thioether bonds with cysteine. This is followed by membrane translocation and cleavage of the modified precursor. Post-translationally, the structure of the 2,3-didehydrobutyrine is not discussed in PubMed:15361862. It is probably the Z-isomer by similarity.

In terms of biological role, lanthionine-containing peptide antibiotic (lantibiotic) active on Gram-positive bacteria. The bactericidal activity of lantibiotics is based on depolarization of energized bacterial cytoplasmic membranes, initiated by the formation of aqueous transmembrane pores. This Lactococcus lactis subsp. lactis (Streptococcus lactis) protein is Lantibiotic nisin-Z (nisZ).